Consider the following 195-residue polypeptide: Imidazoleglycerol-phosphate dehydratase (195 aa).

The protein belongs to the imidazoleglycerol-phosphate dehydratase family.

The protein resides in the cytoplasm. The catalysed reaction is D-erythro-1-(imidazol-4-yl)glycerol 3-phosphate = 3-(imidazol-4-yl)-2-oxopropyl phosphate + H2O. It functions in the pathway amino-acid biosynthesis; L-histidine biosynthesis; L-histidine from 5-phospho-alpha-D-ribose 1-diphosphate: step 6/9. This chain is Imidazoleglycerol-phosphate dehydratase, found in Cupriavidus taiwanensis (strain DSM 17343 / BCRC 17206 / CCUG 44338 / CIP 107171 / LMG 19424 / R1) (Ralstonia taiwanensis (strain LMG 19424)).